A 230-amino-acid chain; its full sequence is Probable septum site-determining protein MinC (230 aa).

It belongs to the MinC family. In terms of assembly, interacts with MinD and FtsZ.

Cell division inhibitor that blocks the formation of polar Z ring septums. Rapidly oscillates between the poles of the cell to destabilize FtsZ filaments that have formed before they mature into polar Z rings. Prevents FtsZ polymerization. The chain is Probable septum site-determining protein MinC from Rhodopseudomonas palustris (strain BisA53).